The following is a 579-amino-acid chain: O-fucosyltransferase 24 (579 aa).

Residues 58–78 (LWAFSLFLLSILGISLRLGLC) form a helical; Signal-anchor for type II membrane protein membrane-spanning segment. Asn133 is a glycosylation site (N-linked (GlcNAc...) asparagine). Position 355 to 357 (355 to 357 (HLR)) interacts with substrate. N-linked (GlcNAc...) asparagine glycans are attached at residues Asn528, Asn573, and Asn576.

This sequence belongs to the glycosyltransferase GT106 family.

The protein resides in the membrane. The protein operates within glycan metabolism. This chain is O-fucosyltransferase 24, found in Arabidopsis thaliana (Mouse-ear cress).